The sequence spans 210 residues: Prolactin (210 aa).

Residues M1–A23 form the signal peptide. Intrachain disulfides connect C69–C183 and C200–C210.

This sequence belongs to the somatotropin/prolactin family.

It localises to the secreted. The sequence is that of Prolactin (prl) from Oncorhynchus mykiss (Rainbow trout).